The primary structure comprises 620 residues: Acetylcholinesterase 1 (620 aa).

The first 31 residues, 1–31, serve as a signal peptide directing secretion; sequence MRNSLLFFIFLPSTILAVDLIHLHDGSPLFG. The N-linked (GlcNAc...) asparagine glycan is linked to Asn74. A disulfide bridge connects residues Cys82 and Cys109. The active-site Acyl-ester intermediate is Ser216. Cys270 and Cys286 are oxidised to a cystine. Asn272 carries N-linked (GlcNAc...) asparagine glycosylation. Residues Glu346 and His468 each act as charge relay system in the active site. A disulfide bridge links Cys430 with Cys558. N-linked (GlcNAc...) asparagine glycans are attached at residues Asn486 and Asn536.

The protein belongs to the type-B carboxylesterase/lipase family. Oligomer composed of disulfide-linked homodimers.

The protein localises to the synapse. Its subcellular location is the secreted. It is found in the cell membrane. The catalysed reaction is acetylcholine + H2O = choline + acetate + H(+). Its function is as follows. Rapidly hydrolyzes acetylcholine and releases choline into the synapse. It can hydrolyze propionylcholine and butyrylthiocholine in vitro. This is Acetylcholinesterase 1 (ace-1) from Caenorhabditis elegans.